The following is a 523-amino-acid chain: Cytoplasmic dynein 1 light intermediate chain 1 (523 aa).

Residues 1-25 (MAAVGRVGSFGSSPPGLASTYASGP) are disordered. Position 74–81 (74–81 (GEDGAGKT)) interacts with ATP. 3 disordered regions span residues 200-219 (PGED…QEDR), 387-434 (PPTA…DPNM), and 457-523 (GSPG…GEAS). A Phosphoserine modification is found at S207. A Phosphothreonine modification is found at T213. 2 positions are modified to phosphoserine: S398 and S405. T408 is subject to Phosphothreonine. A phosphoserine mark is found at S412, S419, S421, and S427. Residues 412–421 (SVSSNVASVS) are compositionally biased toward low complexity. Positions 458-473 (SPGGPGVGGSPGGGAA) are enriched in gly residues. A compositionally biased stretch (low complexity) spans 474–485 (GASPSLPPSAKK). S486 and S510 each carry phosphoserine. A compositionally biased stretch (low complexity) spans 506 to 523 (PASVSPTTPTSPTEGEAS). T512, T513, and T515 each carry phosphothreonine. S516 carries the post-translational modification Phosphoserine.

Belongs to the dynein light intermediate chain family. Homodimer. The cytoplasmic dynein 1 complex consists of two catalytic heavy chains (HCs) and a number of non-catalytic subunits presented by intermediate chains (ICs), light intermediate chains (LICs) and light chains (LCs); the composition seems to vary in respect to the IC, LIC and LC composition. The heavy chain homodimer serves as a scaffold for the probable homodimeric assembly of the respective non-catalytic subunits. The ICs and LICs bind directly to the HC dimer and the LCs assemble on the IC dimer. Self-associates. Interacts with DYNC1H1; DYNC1LI1 and DYNC1LI2 bind mutually exclusive to DYNC1H1. Interacts with PCNT. Forms a complex with RAB11FIP3 and RAB11A1; the interaction between DYNC1LI1 and RAB11FIP3 is direct and induces DYNC1LI1 localization onto endosomal membrane; the complex regulates endocytic trafficking. Interacts with RUFY3. Post-translationally, phosphorylated during mitosis but not in interphase.

The protein resides in the cytoplasm. It localises to the chromosome. Its subcellular location is the centromere. It is found in the kinetochore. The protein localises to the cytoskeleton. The protein resides in the spindle pole. It localises to the recycling endosome membrane. In terms of biological role, acts as one of several non-catalytic accessory components of the cytoplasmic dynein 1 complex that are thought to be involved in linking dynein to cargos and to adapter proteins that regulate dynein function. Cytoplasmic dynein 1 acts as a motor for the intracellular retrograde motility of vesicles and organelles along microtubules. May play a role in binding dynein to membranous organelles or chromosomes. Probably involved in the microtubule-dependent transport of pericentrin. Is required for progress through the spindle assembly checkpoint. The phosphorylated form appears to be involved in the selective removal of MAD1L1 and MAD1L2 but not BUB1B from kinetochores. Forms a functional Rab11/RAB11FIP3/dynein complex onto endosomal membrane that regulates the movement of peripheral sorting endosomes (SE) along microtubule tracks toward the microtubule organizing center/centrosome, generating the endosomal recycling compartment (ERC). This is Cytoplasmic dynein 1 light intermediate chain 1 (Dync1li1) from Mus musculus (Mouse).